The chain runs to 655 residues: Probable alpha-galactosidase D (655 aa).

The first 16 residues, 1-16, serve as a signal peptide directing secretion; it reads MLPKIFYLSLLPAALG. N-linked (GlcNAc...) asparagine glycosylation is found at Asn47 and Asn91. Cys124 and Cys155 are joined by a disulfide. The Nucleophile role is filled by Asp153. Asn180 and Asn189 each carry an N-linked (GlcNAc...) asparagine glycan. A substrate-binding site is contributed by 198–202; it reads EWGID. Asp220 serves as the catalytic Proton donor. N-linked (GlcNAc...) asparagine glycosylation is found at Asn349, Asn436, Asn458, Asn503, Asn537, Asn541, and Asn580.

Belongs to the glycosyl hydrolase 27 family.

The protein resides in the secreted. It carries out the reaction Hydrolysis of terminal, non-reducing alpha-D-galactose residues in alpha-D-galactosides, including galactose oligosaccharides, galactomannans and galactolipids.. In terms of biological role, hydrolyzes a variety of simple alpha-D-galactoside as well as more complex molecules such as oligosaccharides and polysaccharides. This is Probable alpha-galactosidase D (aglD) from Aspergillus flavus (strain ATCC 200026 / FGSC A1120 / IAM 13836 / NRRL 3357 / JCM 12722 / SRRC 167).